A 288-amino-acid chain; its full sequence is Phenazine biosynthesis-like domain-containing protein (288 aa).

E46 is a catalytic residue.

It belongs to the PhzF family. In terms of assembly, interacts with UNRIP/MAWD.

This chain is Phenazine biosynthesis-like domain-containing protein (Pbld), found in Rattus norvegicus (Rat).